The following is a 192-amino-acid chain: ATP synthase subunit b (192 aa).

A helical membrane pass occupies residues 7-27; it reads LLLVLGVMLLATGVALAAGGE.

The protein belongs to the ATPase B chain family. As to quaternary structure, F-type ATPases have 2 components, F(1) - the catalytic core - and F(0) - the membrane proton channel. F(1) has five subunits: alpha(3), beta(3), gamma(1), delta(1), epsilon(1). F(0) has three main subunits: a(1), b(2) and c(10-14). The alpha and beta chains form an alternating ring which encloses part of the gamma chain. F(1) is attached to F(0) by a central stalk formed by the gamma and epsilon chains, while a peripheral stalk is formed by the delta and b chains.

The protein localises to the cell inner membrane. Its function is as follows. F(1)F(0) ATP synthase produces ATP from ADP in the presence of a proton or sodium gradient. F-type ATPases consist of two structural domains, F(1) containing the extramembraneous catalytic core and F(0) containing the membrane proton channel, linked together by a central stalk and a peripheral stalk. During catalysis, ATP synthesis in the catalytic domain of F(1) is coupled via a rotary mechanism of the central stalk subunits to proton translocation. In terms of biological role, component of the F(0) channel, it forms part of the peripheral stalk, linking F(1) to F(0). This is ATP synthase subunit b from Oleidesulfovibrio alaskensis (strain ATCC BAA-1058 / DSM 17464 / G20) (Desulfovibrio alaskensis).